The primary structure comprises 3001 residues: MEDDDERKLPEADIANPLHNRIEAFDTTLQGISSADRAFKDDDFEQVSLGDQEKAANESQGDLQEPGSFSNSDHGRSSFGGTEVVTYQLSGTQEMYDLMPMDDVQSDRLSSPGPEREAAYSMQQSLSETSLDSVHHPESGYSPVHSPQKPKPKATVPNVSPELLHLVDSAIMGKPESLDKLKNVVCGIENFGCGEESEATAFLVVDSLIATMGGVESFEEDEDSNPPSVMLNSRAAIVSGELIPWLPGLGDNVNFMSPRTRMVRGLLVILRSCTRNRAMCSTAGLLGVLLRSVEAIISKDVDMKWNAAAILLLCIQHLAGHSLSVDDLHRWLQVIKAAITTAWSSPLMLALEKAMSGKESRGPACTFEFDGESSGLLGPGESRWPFTNGYAFATWIYIESFADTLNAATAAAAIAAAAAAKSGKTSAMSAAAAASALAGEGTAHMPRLFSFLSADNQGIEAYFHAQFLVVESGSGKGRKSSLHFTHAFKPQCWYFIGLEHSCKQGLLGKAESELRLYIDGSLYESRPFDFPRISKPLSFCCIGTNPPPTMAGLQRRRRQCPLFAEMGPVYIFKEPIGPERMARLASRGGDVLPCFGNGAGLPWLATNDYVRNKAEESSILDADIGGYTHLLYHPCLLSGRFCPDASLSGAAGTLRRPAEVLGQVHVATRMKPVESFWALAYGGPMSLLPLTVSSVHKDSLEPCLGNLPLSLSTVTLAAPVFRIMSVAIQHPGNNEELCRTQGPEILARILSYLLHSLASLDRKHDGVGEEELVAAIVSLCQSQKINHVLKVQLFRTLLLDLKIWSLCNYGLQKKLLSSLQDMVFTEATAMRDAEAIQLLLDGCRRCYWMISEKDSETTFPLDGNTRQMGELNALIDELLVIIELLMGAASPSLAADDLRRLLGFIIDSPQPNQVHCKFNANASAVCSLLALLLIKLVPLFRSQIMYMNSRKPSYNGLHGEMWVISRENGLTDCTRLCWLVVQPNAARAQMFAEVFITSGGIETLLVLLQREAKTGEDNVLAMGRSGKRSSTDPSEKSPYNESGSVKQLDSNPHDNEIGFDLPGPDGNSVEDDNVGSLNVPESVRQEKEHGSTPVVCDSDSVSISNSINTERLSAEIGGISLSISADSARNNVYNVDNSDAVVVGIIRLIGALISSGHLTFDFDARSDVTSNILGSGLHENGGTMFDDKVALLLFALLKAFQAAPNRLMTDNVYTTLLGASINASSTEDGLNFYDSGHRFEHSQLLLVLLRSLPSASKALQSRALQDLLFLACSHPENRSSLTTMEEWPEWILEILISNYEKDAGKQSASVGSCEVEDMIHNFLIIMLEHSMRQKDGWKDIEATIHCAEWLSIVGGSSTGEQRIRREESLPIFKRRLFGGLLDFAARELQAQTQVIAAAAAGVAAEGLAPKDAKAGAENAAQLSVFLVENAIVILMLVEDHLRSQSKQTCATNAVASPSPLKKRTSTLTAIGESSEISSSRASLSSDSGKVPLDILASMADSSGQISAVAMERLTAASAAEPYESVSCAFVSYGSCAMDLAEGWKYRSRLWYGVGLPSKPSSLGGGGSGSDSWKSTLEKDAHGNWIELPLVKKSVSMLQALLLDESGLGGGLGIGGGSGTGMGGMTALYQLLDSDQPFLCMLRMVLLSMREEDYGEDNMLMRNLSSERSSGNSVTLDSGSQMSMRQSRSALLWSVLSPIINMPISDSKRQRVLVTACVLYSEVWHAISRDRRPLRKQYIEAIVPPFIAVLRRWRPLLAGIHELATADGMNPLVVDDRALAADALPVEGALSMVTPEWAAAFASPPAAMSLAMIAAGAAGWEAPPPPTPSHLRRDSSMLERKTAKLQTFSSFQKPLEPPNNNAPPRPRDKAAAKAAALAAARDLERNAKIGSGRGLSAVAMATSAQRRNIGDMERLQRWNTSEAMGVAWMECLQPVDTKSVYGKDFNALSYKFIAVLVASFALARNMQRSEIDRRMQDDIIAANRLCLGSRAWRKLIRYLAEMRCFFGPFGDGICSPERVFWKLDSMESFSRMRQSIRRNYSGTDHHGAAADYDDQTETKSDNGSKGSQSNPPVVAAEVILMEIAYEEDEHGEGDQLDVKGNAEEHKRDEGRISGSHEHASRTSAGNSDPRTSNDLEMVRDSSVVAPGFVPSELDERILLELPTSMVRPLRVVKGTFQITTRRINFIVDNRESQNLADHSDESQSGDQEKDRSWPMSSLHQIYSRRYLLRRSALELFMVDRSNFFFDFGNTEGRRNAYRAIVQARPPHLNNIYLATQRPEQLLRRTQLMERWARWEISNFEYLMQLNTLAGRSYNDITQYPVFPWIISDNSSESLDLSNPSTFRDLSKPIGALNPERLKKFQERYSSFEDPVIPKFHYGSHYSSAGAVLYYLARVEPFTTLSIQLQGGKFDHADRMFSDFPGTWNGVLEDMSDVKELVPELFYLPEVLTNENSIDFGTTQLGEKLDAVKLPPWAKNPVDFVHKQRRALESEHVSAHLHEWIDLIFGYKQRGKEAIMANNVFFYITYEGTVDIDKITDPVQQRATQDQIAYFGQTPSQLLTVPHMKRMPLKDVLHMQTIFRNPKEIKPYTVQTPERCNLPASAIQASSDSVVIVDMNVPAARVAQHKWQPNTPDGQGTPFLFHHGKATTTSTSGSLMRMFKGPASSGTGDWQFPQAQAFASSGIRSSSVIAITSDGEIITGGHADNSIKLVSSDGAKTLETAFGHCAPVTCLALSPDNNFLVTGSRDSTVLLWRIHKAFTSRTSVSEPSTGSGAPSSTSNTNLANTLANKGKKCRLEGPIQVLRGHRRELVCCCVSSDQGVVVSSSESSDVLLHSIRKGRLIRRLVGVKADSLCISSDGVIMAWSSSEGSISVFTINGVLIAKAKFPLFCSVGCMEISMDGQNALIGMNSCSNSDYSSSNDTSKDSKEIERLDVPSPSICFLNLYTLQVFHVLKLGQGQDITALALNVDNTNLLVSTEDKQLIIFTDPALSLKVVDQMLKLGWE.

Disordered stretches follow at residues 43 to 80 (DFEQVSLGDQEKAANESQGDLQEPGSFSNSDHGRSSFG), 103 to 156 (DVQS…KATV), 1018 to 1076 (NVLA…NVGS), 1846 to 1868 (TFSSFQKPLEPPNNNAPPRPRDK), 2039 to 2071 (YSGTDHHGAAADYDDQTETKSDNGSKGSQSNPP), 2101 to 2132 (AEEHKRDEGRISGSHEHASRTSAGNSDPRTSN), and 2193 to 2212 (NLADHSDESQSGDQEKDRSW). Ser48 carries the phosphoserine modification. Polar residues-rich tracts occupy residues 57–72 (NESQGDLQEPGSFSNS), 121–132 (SMQQSLSETSLD), and 1037–1050 (SPYNESGSVKQLDS). Over residues 1854-1863 (LEPPNNNAPP) the composition is skewed to pro residues. The segment covering 2101–2119 (AEEHKRDEGRISGSHEHAS) has biased composition (basic and acidic residues). The segment covering 2120–2129 (RTSAGNSDPR) has biased composition (polar residues). The BEACH-type PH domain occupies 2151-2260 (ELDERILLEL…GRRNAYRAIV (110 aa)). Basic and acidic residues predominate over residues 2196 to 2211 (DHSDESQSGDQEKDRS). Residues 2275–2564 (QRPEQLLRRT…QLLTVPHMKR (290 aa)) form the BEACH domain. 5 WD repeats span residues 2679-2718 (SGIRSSSVIAITSDGEIITGGHADNSIKLVSSDGAKTLET), 2721-2760 (GHCAPVTCLALSPDNNFLVTGSRDSTVLLWRIHKAFTSRT), 2802-2841 (GHRRELVCCCVSSDQGVVVSSSESSDVLLHSIRKGRLIRR), 2842-2881 (LVGVKADSLCISSDGVIMAWSSSEGSISVFTINGVLIAKA), and 2953-2992 (GQGQDITALALNVDNTNLLVSTEDKQLIIFTDPALSLKVV).

The sequence is that of BEACH domain-containing protein C2 from Arabidopsis thaliana (Mouse-ear cress).